Reading from the N-terminus, the 720-residue chain is Chloroplastic group IIA intron splicing facilitator CRS1, chloroplastic (720 aa).

Residues 1–77 (MRNGINILSY…DQFRENRGVS (77 aa)) constitute a chloroplast transit peptide. Positions 131–159 (KAMKKIVRNVEKLDEDSDSEETQMDDLSE) form a coiled coil. 2 CRM domains span residues 205-301 (LILD…EGQD) and 359-456 (AKLT…EVAD). 2 coiled-coil regions span residues 447–477 (KDFL…TKRE) and 517–553 (RNLE…NMEL). The 101-residue stretch at 570 to 670 (EILTNEEREC…KNYKRPSSKL (101 aa)) folds into the CRM 3 domain.

In terms of assembly, homodimer. Interacts with RNA. Part of large ribonucleo-protein complexes that include group IIA introns and CRS1.

The protein resides in the plastid. Its subcellular location is the chloroplast stroma. Functionally, required for the splicing of group IIA introns in chloroplasts, by regulating the intron folding. Forms splicing particles with RNA. May also be involved in chloroplast protein translation. This chain is Chloroplastic group IIA intron splicing facilitator CRS1, chloroplastic, found in Arabidopsis thaliana (Mouse-ear cress).